Consider the following 396-residue polypeptide: Glutamyl-tRNA reductase (396 aa).

Substrate is bound by residues 45 to 48 (TCNR), S101, 106 to 108 (EDQ), and Q112. Residue C46 is the Nucleophile of the active site. 177–182 (GFGDVG) lines the NADP(+) pocket.

The protein belongs to the glutamyl-tRNA reductase family. Homodimer.

It catalyses the reaction (S)-4-amino-5-oxopentanoate + tRNA(Glu) + NADP(+) = L-glutamyl-tRNA(Glu) + NADPH + H(+). Its pathway is porphyrin-containing compound metabolism; protoporphyrin-IX biosynthesis; 5-aminolevulinate from L-glutamyl-tRNA(Glu): step 1/2. Its function is as follows. Catalyzes the NADPH-dependent reduction of glutamyl-tRNA(Glu) to glutamate 1-semialdehyde (GSA). In Clostridium acetobutylicum (strain ATCC 824 / DSM 792 / JCM 1419 / IAM 19013 / LMG 5710 / NBRC 13948 / NRRL B-527 / VKM B-1787 / 2291 / W), this protein is Glutamyl-tRNA reductase.